The chain runs to 65 residues: Ferredoxin soy (65 aa).

In terms of domain architecture, 4Fe-4S ferredoxin-type spans 2–29 (GVQVDKERCVGAGMCALTAPDVFTQDDD). The [3Fe-4S] cluster site is built by Cys-10, Cys-16, and Cys-55.

Requires [3Fe-4S] cluster as cofactor.

Its function is as follows. Electron transport protein for the cytochrome P-450-SOY system. This chain is Ferredoxin soy (soyB), found in Streptomyces griseus.